The following is a 611-amino-acid chain: Zinc metalloproteinase nas-31 (611 aa).

The signal sequence occupies residues 1–17; sequence MILQLLFYSLFTHLAVS. A propeptide spanning residues 18–158 is cleaved from the precursor; sequence QIDVNQALNQ…TVSTASRARR (141 aa). 2 N-linked (GlcNAc...) asparagine glycosylation sites follow: asparagine 53 and asparagine 67. Residues 82–95 are compositionally biased toward polar residues; sequence NAGTNQENGATEQQ. Residues 82–103 form a disordered region; that stretch reads NAGTNQENGATEQQKPLREKPR. The Peptidase M12A domain occupies 159–354; that stretch reads QAYRDRYYPS…SMMNEHYKCK (196 aa). N-linked (GlcNAc...) asparagine glycosylation is present at asparagine 200. Cystine bridges form between cysteine 203–cysteine 353, cysteine 224–cysteine 243, cysteine 357–cysteine 376, cysteine 379–cysteine 390, cysteine 397–cysteine 428, cysteine 455–cysteine 476, cysteine 532–cysteine 564, cysteine 539–cysteine 557, and cysteine 548–cysteine 561. Histidine 251 lines the Zn(2+) pocket. The active site involves glutamate 252. Zn(2+) contacts are provided by histidine 255 and histidine 261. One can recognise an EGF-like domain in the interval 340–396; that stretch reads GFYDISMMNEHYKCKELCPAASSAQCKNGGFPSPRNCAICICPSGYGGILCDQRPPG. The CUB domain occupies 397-516; the sequence is CGDSVTATTT…LEYRAVTPSV (120 aa). The N-linked (GlcNAc...) asparagine glycan is linked to asparagine 424. A ShKT domain is found at 532 to 564; it reads CQDLHPNCDFYKFFGMCRSKKIRSNCKFTCHDC.

The cofactor is Zn(2+). In terms of tissue distribution, expressed in excretory cell and in amphid and phasmid sheath glia.

The protein localises to the secreted. Functionally, metalloprotease. This is Zinc metalloproteinase nas-31 (nas-31) from Caenorhabditis elegans.